The primary structure comprises 537 residues: MLGLTDMLKDGAKHFAGKDEAILRNIDATKQLSEITRTSLGPNGMNKMIINHLEKLFVTNDAATIIRELDVIHPAAKMLVMAAQMQEQEMGDGTNYVVTLTGEFLQKAATLLEMGLHPSEIITGFEKAGAKLQEIIESMIVYNLKDITDKKEVTKCLKSAIASKQYGYEEFLSEIITNACLQVLPKKAVNFNIDNVRVTKIPGGGVTDTSVIKGFVIPMDAEGTIKRMEKAKIAVFTMGIDLGRTETTGKVLITNEDELLQFSKGEEDSIRETITAIANTGVKVIISGSTVSELALHYIERFKIMLVRIQSKFQLRRVCKAIGATPLVKLGAPIPEELGYCDEVLVEEIGSTKCCIFRQNKEESEISTIVVRGSTNNILDDIERAIDDGVNVFKGMCKDGRFLAGAGAFEIEASRKLQAFADATPGLSQYSIRQYAEAFEIIPRTLAETSGHDSSKAISNIYAAHTKGNTNYGLDIESGQPKSVLEMDVLDAFASKLFAIKLATNTANTVLRVDQIIMSKPAGGPKPPKMGPTDADD.

This sequence belongs to the TCP-1 chaperonin family. In terms of assembly, heterooligomeric complex.

It is found in the cytoplasm. Molecular chaperone; assists the folding of proteins upon ATP hydrolysis. Known to play a role, in vitro, in the folding of actin and tubulin. In Dictyostelium discoideum (Social amoeba), this protein is T-complex protein 1 subunit theta (cct8).